The following is a 332-amino-acid chain: Formamidase (332 aa).

The CN hydrolase domain occupies 14–259 (FLAALIQYPV…WEIVTAEVYP (246 aa)). Glu60 functions as the Proton acceptor in the catalytic mechanism. Lys132 serves as the catalytic Proton donor. The active-site Nucleophile is the Cys165.

This sequence belongs to the carbon-nitrogen hydrolase superfamily. Aliphatic amidase family.

It catalyses the reaction formamide + H2O = formate + NH4(+). In terms of biological role, is an aliphatic amidase with a restricted substrate specificity, as it only hydrolyzes formamide. The protein is Formamidase of Bacillus cereus (strain Q1).